A 320-amino-acid chain; its full sequence is Putative cyclin-D7-1 (320 aa).

Residues 1-46 (MDDDDDTSFNNSLDLYCDEDPFDSTPPPPPPPPEQQQQAGTTTPDD) are disordered. A compositionally biased stretch (pro residues) spans 24-34 (STPPPPPPPPE). Residues 35–44 (QQQQAGTTTP) are compositionally biased toward low complexity.

The protein belongs to the cyclin family. Cyclin D subfamily.

This is Putative cyclin-D7-1 (CYCD7-1) from Oryza sativa subsp. japonica (Rice).